The following is a 267-amino-acid chain: Zinc finger protein ZAT1 (267 aa).

The C2H2-type 1 zinc finger occupies histidine 5–histidine 27. Disordered regions lie at residues proline 34–lysine 99 and serine 181–serine 204. Basic and acidic residues predominate over residues glutamine 52–lysine 62. Positions lysine 63–arginine 73 are enriched in basic residues. Residues glutamine 83–aspartate 97 are compositionally biased toward basic and acidic residues. 2 consecutive C2H2-type zinc fingers follow at residues phenylalanine 160–histidine 182 and histidine 209–histidine 231.

It is found in the nucleus. Probable transcription factor that may be involved in stress responses. In Arabidopsis thaliana (Mouse-ear cress), this protein is Zinc finger protein ZAT1 (ZAT1).